The sequence spans 459 residues: 1,3-beta-glucanosyltransferase gas2 (459 aa).

A signal peptide spans 1 to 19 (MVSFTKFTLQLLSASAAFA). 2 N-linked (GlcNAc...) asparagine glycosylation sites follow: Asn-34 and Asn-68. Cys-69 and Cys-98 are oxidised to a cystine. Tyr-87 is a (1,3-beta-D-glucosyl)n binding site. Residues Asn-90, Asn-104, and Asn-146 are each glycosylated (N-linked (GlcNAc...) asparagine). (1,3-beta-D-glucosyl)n contacts are provided by Asn-155 and Glu-156. Catalysis depends on Glu-156, which acts as the Proton donor. The N-linked (GlcNAc...) asparagine glycan is linked to Asn-160. Asp-197 and Arg-202 together coordinate (1,3-beta-D-glucosyl)n. Intrachain disulfides connect Cys-211-Cys-350 and Cys-235-Cys-266. Residues Asn-212, Asn-218, and Asn-254 are each glycosylated (N-linked (GlcNAc...) asparagine). The active-site Nucleophile is Glu-263. The N-linked (GlcNAc...) asparagine glycan is linked to Asn-284. Residue Tyr-295 coordinates (1,3-beta-D-glucosyl)n. 5 N-linked (GlcNAc...) asparagine glycosylation sites follow: Asn-308, Asn-334, Asn-344, Asn-354, and Asn-370. Disulfide bonds link Cys-374–Cys-427, Cys-383–Cys-449, and Cys-402–Cys-409. Asn-423 is a glycosylation site (N-linked (GlcNAc...) asparagine).

It belongs to the glycosyl hydrolase 72 family.

The protein resides in the endoplasmic reticulum lumen. It localises to the secreted. Its function is as follows. Splits internally a 1,3-beta-glucan molecule and transfers the newly generated reducing end (the donor) to the non-reducing end of another 1,3-beta-glucan molecule (the acceptor) forming a 1,3-beta linkage, resulting in the elongation of 1,3-beta-glucan chains in the cell wall. This chain is 1,3-beta-glucanosyltransferase gas2 (gas2), found in Schizosaccharomyces pombe (strain 972 / ATCC 24843) (Fission yeast).